Here is an 845-residue protein sequence, read N- to C-terminus: Protein translocase subunit SecA (845 aa).

Residues Gln88, Gly106–Thr110, and Asp495 each bind ATP. The disordered stretch occupies residues Ser804 to Lys838. Residues Arg809 to Pro818 are compositionally biased toward basic residues. Residues Cys831, Cys833, Cys842, and Cys843 each contribute to the Zn(2+) site.

The protein belongs to the SecA family. As to quaternary structure, monomer and homodimer. Part of the essential Sec protein translocation apparatus which comprises SecA, SecYEG and auxiliary proteins SecDF. Other proteins may also be involved. Zn(2+) serves as cofactor.

The protein resides in the cell inner membrane. It localises to the cytoplasm. It catalyses the reaction ATP + H2O + cellular proteinSide 1 = ADP + phosphate + cellular proteinSide 2.. Its function is as follows. Part of the Sec protein translocase complex. Interacts with the SecYEG preprotein conducting channel. Has a central role in coupling the hydrolysis of ATP to the transfer of proteins into and across the cell membrane, serving as an ATP-driven molecular motor driving the stepwise translocation of polypeptide chains across the membrane. The chain is Protein translocase subunit SecA from Halothermothrix orenii (strain H 168 / OCM 544 / DSM 9562).